We begin with the raw amino-acid sequence, 200 residues long: MMTFAFYLFAISACVAGFMVVIGRNPVHSVLWLILAFLSAAGLFVLQGAEFVAMLLVVVYVGAVAVLFLFVVMMLDVDFAELKGELARYLPLALVIGVVLLAQLGIAFSGWTPSDQAESLRAAPVDAAVENTLGLGLVLYDRYVLMFQLAGLVLLVAMIGAIVLTMRHRKDVKRQNVLEQMWRDPAKTMELKDVKPGQGL.

5 helical membrane passes run 2 to 22 (MTFA…MVVI), 26 to 46 (PVHS…LFVL), 51 to 71 (FVAM…FLFV), 90 to 110 (LPLA…AFSG), and 144 to 164 (VLMF…AIVL).

Belongs to the complex I subunit 6 family. In terms of assembly, NDH-1 is composed of at least 14 different subunits, Nqo1 to Nqo14. The complex has a L-shaped structure, with the hydrophobic arm (subunits Nqo7, Nqo8, Nqo10 to Nqo14) embedded in the inner membrane and the hydrophilic peripheral arm (subunits Nqo1 to Nqo6, Nqo9) protruding into the bacterial cytoplasm. The hydrophilic domain contains all the redox centers.

Its subcellular location is the cell inner membrane. It catalyses the reaction a quinone + NADH + 5 H(+)(in) = a quinol + NAD(+) + 4 H(+)(out). Functionally, NDH-1 shuttles electrons from NADH, via FMN and iron-sulfur (Fe-S) centers, to quinones in the respiratory chain. The immediate electron acceptor for the enzyme in this species is believed to be ubiquinone. Couples the redox reaction to proton translocation (for every two electrons transferred, four hydrogen ions are translocated across the cytoplasmic membrane), and thus conserves the redox energy in a proton gradient. The sequence is that of NADH-quinone oxidoreductase chain 10 from Paracoccus denitrificans.